Consider the following 795-residue polypeptide: Levansucrase (795 aa).

The first 36 residues, 1–36, serve as a signal peptide directing secretion; that stretch reads METKVRKKMYKKGKFWVVATITTAMLTGIGLSSVQA. 2 stretches are compositionally biased toward polar residues: residues 42–66 and 112–130; these read TQVSSELAERSQVQENTTASSSAAE and QAATVTKTSASTPEVGQTN. 2 disordered regions span residues 42–83 and 103–138; these read TQVS…NPAA and ESKASKTKDQAATVTKTSASTPEVGQTNEKAKATKE. Sucrose-binding residues include Trp-245, Asp-246, and Ser-315. Asp-246 serves as the catalytic Nucleophile. Asp-394 is a binding site for Ca(2+). The sucrose site is built by Arg-399 and Asp-400. Residues Gln-425, Asn-464, and Asp-496 each coordinate Ca(2+). Glu-497 is a sucrose binding site. Glu-499 acts as the Proton donor/acceptor in catalysis. Arg-517 is a sucrose binding site. A helical membrane pass occupies residues 774–794; sequence GNSFFAALLALFSAFCVSIGF.

It belongs to the glycosyl hydrolase 68 family.

It is found in the cell membrane. The protein localises to the cell surface. It carries out the reaction [6)-beta-D-fructofuranosyl-(2-&gt;](n) alpha-D-glucopyranoside + sucrose = [6)-beta-D-fructofuranosyl-(2-&gt;](n+1) alpha-D-glucopyranoside + D-glucose. With respect to regulation, ca(2+) may play an important structural role and promote stability of levansucrase. Its function is as follows. Catalyzes the synthesis of levan, a fructose polymer, by transferring the fructosyl moiety from sucrose to a growing acceptor molecule. Also displays sucrose hydrolase activity. The sequence is that of Levansucrase from Streptococcus mutans serotype c (strain ATCC 700610 / UA159).